The following is a 206-amino-acid chain: Large ribosomal subunit protein uL4 (206 aa).

The segment at 49-79 (KVKTRSEISRTTKKMYKQKGTGNARHGAASA) is disordered.

It belongs to the universal ribosomal protein uL4 family. As to quaternary structure, part of the 50S ribosomal subunit.

Its function is as follows. One of the primary rRNA binding proteins, this protein initially binds near the 5'-end of the 23S rRNA. It is important during the early stages of 50S assembly. It makes multiple contacts with different domains of the 23S rRNA in the assembled 50S subunit and ribosome. Functionally, forms part of the polypeptide exit tunnel. This chain is Large ribosomal subunit protein uL4, found in Methylobacterium sp. (strain 4-46).